A 261-amino-acid chain; its full sequence is Cell division protein B (261 aa).

The segment at 213–261 (SEDMILNYIKTTGGFIDVDYIAKNFDVSKDEVFNVLRRLEEKGLIVLEG) is winged-helix-like fold.

Interacts with CdvA. Interacts with CdvC.

It localises to the cytoplasm. The protein localises to the nucleoid. In terms of biological role, part of a cell division machinery. The CdvA, CdvB and CdvC proteins polymerize between segregating nucleoids and persist throughout cell division, forming a successively smaller structure during constriction. This chain is Cell division protein B, found in Sulfolobus acidocaldarius (strain ATCC 33909 / DSM 639 / JCM 8929 / NBRC 15157 / NCIMB 11770).